We begin with the raw amino-acid sequence, 514 residues long: Multifunctional alkaline phosphatase superfamily protein PehA (514 aa).

Residues Asp12, Cys57, Asp324, and His325 each contribute to the Mn(2+) site. The Nucleophile role is filled by Cys57. At Cys57 the chain carries 3-oxoalanine (Cys).

This sequence belongs to the alkaline phosphatase superfamily. As to quaternary structure, homotetramer. It depends on Mn(2+) as a cofactor. The conversion to 3-oxoalanine (also known as C-formylglycine, FGly), of a serine or cysteine residue in prokaryotes and of a cysteine residue in eukaryotes, is critical for catalytic activity. Phosphate triester hydrolytic activity is retained with unmodified cysteine acting as a nucleophile.

Its activity is regulated as follows. Anions including Cl(-) and CH3COO(-), and SO4(2-) salts stimulate activity 20-40% at 100 mM. Its function is as follows. Hydrolytic enzyme with a broad substrate specificity acting on phosphate diesters and phosphonate monoesters. Hydrolyzes phosphate mono- and triesters, sulfate monoesters and sulfonate monoesters. Hydrolyzes glyphosate monoesters. Does not hydrolyze DNA or cGMP. Hydrolyzes glyceryl glyphosate, but this substrate has a much lower affinity than the glyphosate monoesters. The protein is Multifunctional alkaline phosphatase superfamily protein PehA of Trinickia caryophylli (Paraburkholderia caryophylli).